A 138-amino-acid polypeptide reads, in one-letter code: Large ribosomal subunit protein eL14A (138 aa).

Ser-2 is modified (N-acetylserine).

It belongs to the eukaryotic ribosomal protein eL14 family. In terms of assembly, component of the large ribosomal subunit (LSU). Mature yeast ribosomes consist of a small (40S) and a large (60S) subunit. The 40S small subunit contains 1 molecule of ribosomal RNA (18S rRNA) and 33 different proteins (encoded by 57 genes). The large 60S subunit contains 3 rRNA molecules (25S, 5.8S and 5S rRNA) and 46 different proteins (encoded by 81 genes). N-terminally acetylated by acetyltransferase NatA.

Its subcellular location is the cytoplasm. Its function is as follows. Component of the ribosome, a large ribonucleoprotein complex responsible for the synthesis of proteins in the cell. The small ribosomal subunit (SSU) binds messenger RNAs (mRNAs) and translates the encoded message by selecting cognate aminoacyl-transfer RNA (tRNA) molecules. The large subunit (LSU) contains the ribosomal catalytic site termed the peptidyl transferase center (PTC), which catalyzes the formation of peptide bonds, thereby polymerizing the amino acids delivered by tRNAs into a polypeptide chain. The nascent polypeptides leave the ribosome through a tunnel in the LSU and interact with protein factors that function in enzymatic processing, targeting, and the membrane insertion of nascent chains at the exit of the ribosomal tunnel. The polypeptide is Large ribosomal subunit protein eL14A (Saccharomyces cerevisiae (strain ATCC 204508 / S288c) (Baker's yeast)).